Consider the following 395-residue polypeptide: RNA demethylase ALKBH5 (395 aa).

Disordered stretches follow at residues 1-28 (MAAA…AGSR) and 47-83 (AAEP…EEEA). N-acetylalanine is present on Ala2. A Glycyl lysine isopeptide (Lys-Gly) (interchain with G-Cter in ubiquitin) cross-link involves residue Lys58. Residues 60 to 83 (KYQEDSDPERSDYEEHQLQKEEEA) are compositionally biased toward basic and acidic residues. Residues Ser65 and Ser70 each carry the phosphoserine modification. Positions 68–117 (ERSDYEEHQLQKEEEARKVKSGIRQIRLFSQDECSKIEARIDEVVSRAEK) form a coiled coil. Position 72 is a phosphotyrosine (Tyr72). Lys87 is covalently cross-linked (Glycyl lysine isopeptide (Lys-Gly) (interchain with G-Cter in SUMO1)). Ser88 bears the Phosphoserine mark. N6-acetyllysine is present on Lys133. Tyr140 is a catalytic residue. 2-oxoglutarate is bound by residues Asn194, Tyr196, and His205. An intrachain disulfide couples Cys231 to Cys268. Lys236 carries the N6-acetyllysine modification. 2-oxoglutarate-binding residues include His267 and Arg278. Residues 294 to 395 (ETKSLSSSTL…PTRKVKMRRH (102 aa)) form a disordered region. Residues 296–306 (KSLSSSTLPPS) are compositionally biased toward low complexity. A Glycyl lysine isopeptide (Lys-Gly) (interchain with G-Cter in SUMO1) cross-link involves residue Lys322. At Ser326 the chain carries Phosphoserine. Residue Lys329 forms a Glycyl lysine isopeptide (Lys-Gly) (interchain with G-Cter in SUMO2) linkage. A compositionally biased stretch (basic and acidic residues) spans 329–350 (KADPDAAHRPRILEMDKEENRR). Arg360 bears the Omega-N-methylarginine mark. Phosphoserine is present on residues Ser362, Ser372, Ser375, and Ser385.

This sequence belongs to the alkB family. As to quaternary structure, monomer. Interacts with RBM33; promoting desumoylation by SENP1 and recruitment to N(6)-methyladenosine-containing mRNAs. Interacts (when acetylated by KAT8) with PSPC1; interaction facilitates recognition of N(6)-methyladenosine (m6A) mRNA. Fe(2+) is required as a cofactor. Post-translationally, phosphorylated at Ser-88 and Ser-326 in response to reactive oxygen species (ROS), promoting sumoylation and inactivation. Acetylated by KAT8 at Lys-236, promoting interaction with PSPC1, thereby facilitating recognition of N(6)-methyladenosine (m6A) mRNA by ALKBH5. Deacetylated at Lys-236 by HDAC7. In terms of processing, sumoylated at Lys-87 and Lys-322 by PIAS4 following phosphorylation at Ser-88 and Ser-326 in response to reactive oxygen species (ROS), inhibiting the RNA demethylase activity. Desumoylated by SENP1; relieving RNA demethylase inhibition, leading to N(6)-methyladenosine-containing mRNAs demethylation. Post-translationally, ubiquitinated at Lys-58 via 'Lys-48'-linked polyubiquitin chain, leading to its degradation by the proteasome. Deubiquitinated at Lys-58 by USP9X, promoting its stabilizazion.

The protein localises to the nucleus speckle. The catalysed reaction is an N(6)-methyladenosine in mRNA + 2-oxoglutarate + O2 = an adenosine in mRNA + formaldehyde + succinate + CO2. RNA demethylase activity is inhibited following sumoylation. Inhibition is relieved following desumoylation. Dioxygenase that specifically demethylates N(6)-methyladenosine (m6A) RNA, the most prevalent internal modification of messenger RNA (mRNA) in higher eukaryotes. Demethylates RNA by oxidative demethylation, which requires molecular oxygen, alpha-ketoglutarate and iron. Demethylation of m6A mRNA affects mRNA processing, translation and export. Can also demethylate N(6)-methyladenosine in single-stranded DNA (in vitro). Required for the late meiotic and haploid phases of spermatogenesis by mediating m6A demethylation in spermatocytes and round spermatids: m6A demethylation of target transcripts is required for correct splicing and the production of longer 3'-UTR mRNAs in male germ cells. Involved in paraspeckle assembly, a nuclear membraneless organelle, by undergoing liquid-liquid phase separation. Paraspeckle assembly is coupled with m6A demethylation of RNAs, such as NEAT1 non-coding RNA. Also acts as a negative regulator of T-cell development: inhibits gamma-delta T-cell proliferation via demethylation of JAG1 and NOTCH2 transcripts. Inhibits regulatory T-cell (Treg) recruitment by mediating demethylation and destabilization of CCL28 mRNAs. This chain is RNA demethylase ALKBH5 (Alkbh5), found in Rattus norvegicus (Rat).